The primary structure comprises 234 residues: Orotate phosphoribosyltransferase (234 aa).

Residue Lys37 participates in 5-phospho-alpha-D-ribose 1-diphosphate binding. 45–46 (FF) provides a ligand contact to orotate. Residues 83 to 84 (YK), Arg109, Lys110, Lys113, His115, and 134 to 142 (DDVISAGTS) each bind 5-phospho-alpha-D-ribose 1-diphosphate. Positions 138 and 166 each coordinate orotate.

The protein belongs to the purine/pyrimidine phosphoribosyltransferase family. PyrE subfamily. As to quaternary structure, homodimer. Mg(2+) serves as cofactor.

It carries out the reaction orotidine 5'-phosphate + diphosphate = orotate + 5-phospho-alpha-D-ribose 1-diphosphate. The protein operates within pyrimidine metabolism; UMP biosynthesis via de novo pathway; UMP from orotate: step 1/2. Its function is as follows. Catalyzes the transfer of a ribosyl phosphate group from 5-phosphoribose 1-diphosphate to orotate, leading to the formation of orotidine monophosphate (OMP). The chain is Orotate phosphoribosyltransferase from Methylibium petroleiphilum (strain ATCC BAA-1232 / LMG 22953 / PM1).